Consider the following 1025-residue polypeptide: Dihydropyrimidine dehydrogenase [NADP(+)] (1025 aa).

In terms of domain architecture, 4Fe-4S ferredoxin-type 1 spans 69–100 (ERGALREAMRCLKCADAPCQKSCPTNLDIKSF). Positions 79, 82, 87, and 91 each coordinate [4Fe-4S] cluster. FAD is bound at residue Val129. The [4Fe-4S] cluster site is built by Cys130, Cys136, Cys140, and Gln156. Residues 194–198 (GAGPA), 218–226 (EKQEYVGGI), Arg235, and Leu261 contribute to the FAD site. NADP(+)-binding positions include 340–343 (AGDT), 364–365 (RK), and Arg371. N6-acetyllysine is present on Lys384. NADP(+)-binding positions include 437-439 (AFG) and 481-487 (DVVGIAN). An FAD-binding site is contributed by 480 to 489 (GDVVGIANTT). Residues Ser550 and 574–575 (KT) contribute to the FMN site. Residues Asn609 and 668–670 (NLS) contribute to the substrate site. Cys671 acts as the Proton acceptor in catalysis. FMN is bound at residue Lys709. 736–737 (NT) provides a ligand contact to substrate. FMN-binding positions include Gly767, 793–795 (TGG), and 816–817 (CS). 4Fe-4S ferredoxin-type domains lie at 944 to 976 (VVAVIDEEMCINCGKCYMTCNDSGYQAIQFDPE) and 978 to 1007 (HLPTVTDTCTGCTLCLSVCPIIDCIKMVSR). [4Fe-4S] cluster-binding residues include Cys953, Cys956, Cys959, Cys963, Cys986, Cys989, Cys992, and Cys996.

This sequence belongs to the dihydropyrimidine dehydrogenase family. As to quaternary structure, homodimer. It depends on FAD as a cofactor. The cofactor is FMN. [4Fe-4S] cluster is required as a cofactor.

It is found in the cytoplasm. It catalyses the reaction 5,6-dihydrouracil + NADP(+) = uracil + NADPH + H(+). The enzyme catalyses 5,6-dihydrothymine + NADP(+) = thymine + NADPH + H(+). The protein operates within amino-acid biosynthesis; beta-alanine biosynthesis. Its activity is regulated as follows. Inactivated by 5-iodouracil. In terms of biological role, involved in pyrimidine base degradation. Catalyzes the reduction of uracil and thymine. Also involved the degradation of the chemotherapeutic drug 5-fluorouracil. The sequence is that of Dihydropyrimidine dehydrogenase [NADP(+)] (DPYD) from Bos taurus (Bovine).